We begin with the raw amino-acid sequence, 42 residues long: uncharacterized protein (42 aa).

This is an uncharacterized protein from Escherichia coli (Bacteriophage T4).